The following is a 96-amino-acid chain: Small ribosomal subunit protein bS20 (96 aa).

It belongs to the bacterial ribosomal protein bS20 family.

Functionally, binds directly to 16S ribosomal RNA. This chain is Small ribosomal subunit protein bS20, found in Thermotoga petrophila (strain ATCC BAA-488 / DSM 13995 / JCM 10881 / RKU-1).